Reading from the N-terminus, the 451-residue chain is Glycine--tRNA ligase (451 aa).

Residues Arg94 and Glu164 each coordinate substrate. ATP contacts are provided by residues Arg196–Glu198, Phe206–Phe211, Glu281–Leu282, and Gly325–Arg328. Substrate is bound at residue Phe211 to Glu215. Glu321–Gly325 lines the substrate pocket.

The protein belongs to the class-II aminoacyl-tRNA synthetase family. In terms of assembly, homodimer.

The protein resides in the cytoplasm. The catalysed reaction is tRNA(Gly) + glycine + ATP = glycyl-tRNA(Gly) + AMP + diphosphate. Its function is as follows. Catalyzes the attachment of glycine to tRNA(Gly). This Mesoplasma florum (strain ATCC 33453 / NBRC 100688 / NCTC 11704 / L1) (Acholeplasma florum) protein is Glycine--tRNA ligase.